The primary structure comprises 224 residues: UPF0758 protein Noc_0236 (224 aa).

The region spanning 102–224 is the MPN domain; it reads VLTDPQTTQR…TLSFAERGLL (123 aa). Residues histidine 173, histidine 175, and aspartate 186 each coordinate Zn(2+). The short motif at 173–186 is the JAMM motif element; that stretch reads HNHPSGVAEPSRAD.

It belongs to the UPF0758 family.

In Nitrosococcus oceani (strain ATCC 19707 / BCRC 17464 / JCM 30415 / NCIMB 11848 / C-107), this protein is UPF0758 protein Noc_0236.